The primary structure comprises 427 residues: Serine--tRNA ligase (427 aa).

An L-serine-binding site is contributed by Thr-231 to Glu-233. Arg-262–Glu-264 lines the ATP pocket. Glu-285 is a binding site for L-serine. Residue Glu-349 to Ser-352 participates in ATP binding. Ser-385 lines the L-serine pocket.

It belongs to the class-II aminoacyl-tRNA synthetase family. Type-1 seryl-tRNA synthetase subfamily. Homodimer. The tRNA molecule binds across the dimer.

The protein resides in the cytoplasm. The enzyme catalyses tRNA(Ser) + L-serine + ATP = L-seryl-tRNA(Ser) + AMP + diphosphate + H(+). It carries out the reaction tRNA(Sec) + L-serine + ATP = L-seryl-tRNA(Sec) + AMP + diphosphate + H(+). Its pathway is aminoacyl-tRNA biosynthesis; selenocysteinyl-tRNA(Sec) biosynthesis; L-seryl-tRNA(Sec) from L-serine and tRNA(Sec): step 1/1. In terms of biological role, catalyzes the attachment of serine to tRNA(Ser). Is also able to aminoacylate tRNA(Sec) with serine, to form the misacylated tRNA L-seryl-tRNA(Sec), which will be further converted into selenocysteinyl-tRNA(Sec). The chain is Serine--tRNA ligase from Listeria innocua serovar 6a (strain ATCC BAA-680 / CLIP 11262).